We begin with the raw amino-acid sequence, 427 residues long: Acetyl-CoA acetyltransferase, mitochondrial (427 aa).

The N-terminal 33 residues, Met-1–Tyr-33, are a transit peptide targeting the mitochondrion. Lys-66 carries the N6-acetyllysine; alternate modification. Lys-66 is modified (N6-succinyllysine; alternate). Lys-78 is modified (N6-succinyllysine). Cys-126 functions as the Acyl-thioester intermediate in the catalytic mechanism. N6-acetyllysine; alternate is present on residues Lys-174, Lys-181, Lys-190, and Lys-202. Lys-174, Lys-181, Lys-190, and Lys-202 each carry N6-succinyllysine; alternate. Tyr-219 is a CoA binding site. Position 219 (Tyr-219) interacts with K(+). Lys-223 and Lys-230 each carry N6-acetyllysine; alternate. Residues Lys-223 and Lys-230 each carry the N6-succinyllysine; alternate modification. Lys-243 carries the N6-succinyllysine modification. N6-acetyllysine is present on residues Lys-251 and Lys-257. CoA-binding positions include Arg-258–Asp-260 and Lys-263. N6-acetyllysine; alternate is present on Lys-263. Lys-263 is modified (N6-succinyllysine; alternate). 2 positions are modified to N6-succinyllysine: Lys-266 and Lys-268. Lys-273 carries the N6-acetyllysine modification. The K(+) site is built by Ala-280, Ala-281, and Ala-283. Ser-284 contributes to the CoA binding site. N6-acetyllysine is present on Lys-338. Val-381 provides a ligand contact to K(+). Residue Cys-413 is the Proton donor/acceptor of the active site.

This sequence belongs to the thiolase-like superfamily. Thiolase family. Homotetramer. In terms of processing, succinylation at Lys-268, adjacent to a coenzyme A binding site. Desuccinylated by SIRT5.

Its subcellular location is the mitochondrion. It carries out the reaction 2 acetyl-CoA = acetoacetyl-CoA + CoA. It catalyses the reaction propanoyl-CoA + acetyl-CoA = 2-methyl-3-oxobutanoyl-CoA + CoA. The protein operates within lipid metabolism; fatty acid beta-oxidation. Its activity is regulated as follows. Activated by potassium ions, but not sodium ions. This is one of the enzymes that catalyzes the last step of the mitochondrial beta-oxidation pathway, an aerobic process breaking down fatty acids into acetyl-CoA. Using free coenzyme A/CoA, catalyzes the thiolytic cleavage of medium- to long-chain 3-oxoacyl-CoAs into acetyl-CoA and a fatty acyl-CoA shortened by two carbon atoms. The activity of the enzyme is reversible and it can also catalyze the condensation of two acetyl-CoA molecules into acetoacetyl-CoA. Thereby, it plays a major role in ketone body metabolism. The polypeptide is Acetyl-CoA acetyltransferase, mitochondrial (ACAT1) (Macaca fascicularis (Crab-eating macaque)).